Reading from the N-terminus, the 755-residue chain is DNA ligase 1 (755 aa).

The transit peptide at 1–44 (MRRLLTGCLLSSARPLKSRLPLLMSSSLPSSAGKKPKQATLARF) directs the protein to the mitochondrion. An N-acetylserine modification is found at R2. Residues 47–60 (SMKNKPTEGTPSPK) are compositionally biased toward polar residues. Disordered stretches follow at residues 47 to 79 (SMKN…GEEE) and 97 to 127 (PSSM…QRLV). A phosphoserine mark is found at S58 and S75. Low complexity predominate over residues 102–114 (SNFSSIPSSAPSS). S119 and S123 each carry phosphoserine. The interval 309–318 (KLRIGLAEKT) is interaction with target DNA. E417 is an ATP binding site. Residue K419 is the N6-AMP-lysine intermediate of the active site. Positions 424 and 440 each coordinate ATP. Residue E472 coordinates Mg(2+). The interaction with target DNA stretch occupies residues 493–495 (KRK). E571 is a binding site for Mg(2+). Positions 576, 590, and 596 each coordinate ATP.

Belongs to the ATP-dependent DNA ligase family. Mg(2+) serves as cofactor.

The protein resides in the mitochondrion. It is found in the nucleus. It carries out the reaction ATP + (deoxyribonucleotide)n-3'-hydroxyl + 5'-phospho-(deoxyribonucleotide)m = (deoxyribonucleotide)n+m + AMP + diphosphate.. Its function is as follows. DNA ligase that seals nicks in double-stranded DNA during DNA replication, DNA recombination and DNA repair. The mitochondrial form is required for mitochondrial DNA maintenance but is non-essential while the nuclear form is essential for cell viability. The protein is DNA ligase 1 (CDC9) of Saccharomyces cerevisiae (strain ATCC 204508 / S288c) (Baker's yeast).